An 865-amino-acid polypeptide reads, in one-letter code: DNA topoisomerase 1 (865 aa).

The Toprim domain occupies 3–142; that stretch reads KALVIVESPA…RYSRVVFNEI (140 aa). Glu9 serves as a coordination point for Mg(2+). The interval 37–65 is disordered; the sequence is LPTSGSAAKKSADSTSTKTAKKPKKDERG. The span at 39–54 shows a compositional bias: low complexity; that stretch reads TSGSAAKKSADSTSTK. A Mg(2+)-binding site is contributed by Asp111. In terms of domain architecture, Topo IA-type catalytic spans 158-575; the sequence is NINRVNAQQA…NFFSDFTQQL (418 aa). An interaction with DNA region spans residues 192–197; the sequence is SAGRVQ. Tyr319 serves as the catalytic O-(5'-phospho-DNA)-tyrosine intermediate. 3 C4-type zinc fingers span residues 599 to 630, 662 to 689, and 711 to 736; these read CPTC…KERC, CQKC…NPTC, and CEKC…NDEC.

Belongs to the type IA topoisomerase family. As to quaternary structure, monomer. Mg(2+) is required as a cofactor.

It catalyses the reaction ATP-independent breakage of single-stranded DNA, followed by passage and rejoining.. Its function is as follows. Releases the supercoiling and torsional tension of DNA, which is introduced during the DNA replication and transcription, by transiently cleaving and rejoining one strand of the DNA duplex. Introduces a single-strand break via transesterification at a target site in duplex DNA. The scissile phosphodiester is attacked by the catalytic tyrosine of the enzyme, resulting in the formation of a DNA-(5'-phosphotyrosyl)-enzyme intermediate and the expulsion of a 3'-OH DNA strand. The free DNA strand then undergoes passage around the unbroken strand, thus removing DNA supercoils. Finally, in the religation step, the DNA 3'-OH attacks the covalent intermediate to expel the active-site tyrosine and restore the DNA phosphodiester backbone. This Salmonella typhimurium (strain LT2 / SGSC1412 / ATCC 700720) protein is DNA topoisomerase 1.